The primary structure comprises 128 residues: uncharacterized protein (128 aa).

2 helical membrane-spanning segments follow: residues 45–65 (GYFH…LFPF) and 95–115 (FMSH…LSCF).

It is found in the membrane. This is an uncharacterized protein from Saccharomyces cerevisiae (strain ATCC 204508 / S288c) (Baker's yeast).